Consider the following 292-residue polypeptide: 4-hydroxy-tetrahydrodipicolinate synthase (292 aa).

Threonine 45 serves as a coordination point for pyruvate. The Proton donor/acceptor role is filled by tyrosine 133. The Schiff-base intermediate with substrate role is filled by lysine 162. Residue isoleucine 204 participates in pyruvate binding.

This sequence belongs to the DapA family. Homotetramer; dimer of dimers.

It localises to the cytoplasm. It carries out the reaction L-aspartate 4-semialdehyde + pyruvate = (2S,4S)-4-hydroxy-2,3,4,5-tetrahydrodipicolinate + H2O + H(+). Its pathway is amino-acid biosynthesis; L-lysine biosynthesis via DAP pathway; (S)-tetrahydrodipicolinate from L-aspartate: step 3/4. Its function is as follows. Catalyzes the condensation of (S)-aspartate-beta-semialdehyde [(S)-ASA] and pyruvate to 4-hydroxy-tetrahydrodipicolinate (HTPA). In Maridesulfovibrio salexigens (strain ATCC 14822 / DSM 2638 / NCIMB 8403 / VKM B-1763) (Desulfovibrio salexigens), this protein is 4-hydroxy-tetrahydrodipicolinate synthase.